Consider the following 383-residue polypeptide: tRNA-specific 2-thiouridylase MnmA (383 aa).

Residues 29-36 and methionine 55 each bind ATP; that span reads GMSGGVDS. The tract at residues 115 to 117 is interaction with target base in tRNA; that stretch reads NPD. Cysteine 120 acts as the Nucleophile in catalysis. A disulfide bond links cysteine 120 and cysteine 217. Glycine 145 is a binding site for ATP. Positions 167-169 are interaction with tRNA; it reads KDQ. The active-site Cysteine persulfide intermediate is the cysteine 217. The segment at 329 to 330 is interaction with tRNA; the sequence is RY.

Belongs to the MnmA/TRMU family.

The protein localises to the cytoplasm. The enzyme catalyses S-sulfanyl-L-cysteinyl-[protein] + uridine(34) in tRNA + AH2 + ATP = 2-thiouridine(34) in tRNA + L-cysteinyl-[protein] + A + AMP + diphosphate + H(+). Catalyzes the 2-thiolation of uridine at the wobble position (U34) of tRNA, leading to the formation of s(2)U34. The polypeptide is tRNA-specific 2-thiouridylase MnmA (Histophilus somni (strain 2336) (Haemophilus somnus)).